Here is a 471-residue protein sequence, read N- to C-terminus: MSSETTAPMIINEKSSLPVKSEPGQLGNPISDESSEDEQSQIRALEEDQGIYYNEEVVASPKNESDDDIPLRRIQLSHQTSTQQHPEDSEPQEVIDVNDIELPAGEAQPNMERRRSVRFSGRHDEEEDGRNKHFRTPSPESLRYIQALENPMAANGEFEEEFNDLADPQVQPPPMGSPPAYTSADEGPKTPPPRASAGSNMRQESMNELIMRKISDPLQNLIRRASRLEDDSSNDDDDDDDDEDDDYTEDEIAILTYIDAYKTQEVELRPQLRPFTIEYIPAMGDVDLFIKVPRPDEIDDNVGLTQIDEPPSNQSDATIVDMQIRNATKDAAILDDDVPVKLLERADENPDEIKKWISDIKEFHKSKPAQTVHYRTQLPDVETLMQEWPQKLEEVLKTTKIPSAELDVSLEKYVEICLNIVDIPVGKSRIEALHLMFSLLNEFNNSQHFRNLAQNNNLGGETGETMDRLEL.

2 disordered regions span residues 1-202 and 226-246; these read MSSE…SNMR and SRLE…EDDD. Composition is skewed to acidic residues over residues 89 to 99 and 231 to 246; these read SEPQEVIDVND and DSSN…EDDD.

This sequence belongs to the IFT46 family. As to quaternary structure, component of the IFT complex B composed of at least che-2, che-13, dyf-1, dyf-3, dyf-6, dyf-11, dyf-13, ift-20, ift-74, ift-81, ifta-2, osm-1, osm-5 and osm-6. Expressed in the hypodermis and sensory neurons including inner labial, PDE, amphid and phasmid neurons.

It is found in the cell projection. It localises to the cilium. The protein localises to the cytoplasm. Its subcellular location is the cytoskeleton. The protein resides in the cilium basal body. It is found in the dendrite. It localises to the perikaryon. Component of the intraflagellar transport (IFT) complex B required for transport of proteins in the motile cilium. May be required for ciliary entrance and transport of specific ciliary cargo proteins such as che-3 which are related to motility. Required for normal morphology and function of ciliated amphid sensory neurons. This is Intraflagellar transport protein 46 homolog from Caenorhabditis elegans.